A 126-amino-acid polypeptide reads, in one-letter code: MSQVSLSQQLKEGNLFAEQCPSREVLKHVTSRWGVLILVALREGTHRFSDLRRKIGGVSEKMLAQSLQALEQDGFLNRIAYPVVPPHVEYSLTPLGEQVSEKVAALADWIELNLPEVLAVRDERAA.

Positions 20-118 (CPSREVLKHV…WIELNLPEVL (99 aa)) constitute an HTH hxlR-type domain.

This is an uncharacterized protein from Escherichia coli (strain K12).